The sequence spans 74 residues: Protein SOM1, mitochondrial (74 aa).

As to quaternary structure, component of the mitochondrial inner membrane peptidase (IMP) complex which at least consists of IMP1, IMP2 and SOM1.

Its subcellular location is the mitochondrion inner membrane. In terms of biological role, non-catalytic component of the mitochondrial inner membrane peptidase (IMP) complex. IMP catalyzes the removal of signal peptides required for the targeting of proteins from the mitochondrial matrix, across the inner membrane, into the inter-membrane space. SOM1 facilitates cleavage of a subset of IMP substrates. The sequence is that of Protein SOM1, mitochondrial (SOM1) from Saccharomyces cerevisiae (strain ATCC 204508 / S288c) (Baker's yeast).